A 141-amino-acid polypeptide reads, in one-letter code: Putative nickel-responsive regulator (141 aa).

Positions 80, 91, 93, and 99 each coordinate Ni(2+).

This sequence belongs to the transcriptional regulatory CopG/NikR family. The cofactor is Ni(2+).

Functionally, transcriptional regulator. The sequence is that of Putative nickel-responsive regulator from Methanococcus maripaludis (strain C6 / ATCC BAA-1332).